Reading from the N-terminus, the 344-residue chain is Centromere protein N (344 aa).

The protein belongs to the CENP-N/CHL4 family.

It is found in the nucleus. It localises to the chromosome. Its subcellular location is the centromere. Probable component of a centromeric complex involved in assembly of kinetochore proteins, mitotic progression and chromosome segregation. This is Centromere protein N (CENPN) from Gallus gallus (Chicken).